Here is a 65-residue protein sequence, read N- to C-terminus: Large ribosomal subunit protein bL35 (65 aa).

This sequence belongs to the bacterial ribosomal protein bL35 family.

In Rubrobacter xylanophilus (strain DSM 9941 / JCM 11954 / NBRC 16129 / PRD-1), this protein is Large ribosomal subunit protein bL35.